A 303-amino-acid chain; its full sequence is Glycine betaine/carnitine/choline-binding protein OpuCC (303 aa).

Positions 1-20 are cleaved as a signal peptide; that stretch reads MTKIKWLGAFALVFVMLLGG. Residue Cys-21 is the site of N-palmitoyl cysteine attachment. Residue Cys-21 is the site of S-diacylglycerol cysteine attachment.

The protein belongs to the OsmX family. The complex is composed of two ATP-binding proteins (OpuCA), two transmembrane proteins (OpuCB and OpuCD) and a solute-binding protein (OpuCC).

It is found in the cell membrane. In terms of biological role, member of a high affinity multicomponent binding-protein-dependent transport system for glycine betaine, carnitine, and choline. The chain is Glycine betaine/carnitine/choline-binding protein OpuCC (opuCC) from Bacillus subtilis (strain 168).